A 699-amino-acid polypeptide reads, in one-letter code: Glycine--tRNA ligase beta subunit (699 aa).

This sequence belongs to the class-II aminoacyl-tRNA synthetase family. As to quaternary structure, tetramer of two alpha and two beta subunits.

The protein resides in the cytoplasm. The enzyme catalyses tRNA(Gly) + glycine + ATP = glycyl-tRNA(Gly) + AMP + diphosphate. This Baumannia cicadellinicola subsp. Homalodisca coagulata protein is Glycine--tRNA ligase beta subunit.